The chain runs to 190 residues: Dynein axonemal light chain 1 (190 aa).

The residue at position 2 (alanine 2) is an N-acetylalanine. LRR repeat units follow at residues asparagine 49 to lysine 70, asparagine 71 to glycine 92, threonine 94 to lysine 115, and lysine 116 to alanine 137. Phosphoserine is present on serine 56. Residues asparagine 150 to serine 190 enclose the LRRCT domain.

Belongs to the dynein light chain LC1-type family. Interacts with ZMYND10 (via C-terminus). Interacts with DNAH5, a outer arm dynein heavy chain. Interacts with tubulin located within the A-tubule of the outer doublets in a ATP-independent manner. In terms of tissue distribution, expressed in the respiratory epithelium of the upper airways and the ependymal cells lining the brain ventricles.

Its subcellular location is the cytoplasm. It is found in the cytoskeleton. It localises to the cilium axoneme. Functionally, part of the multisubunit axonemal ATPase complexes that generate the force for cilia motility and govern beat frequency. Component of the outer arm dynein (ODA). May be involved in a mechanosensory feedback mechanism controlling ODA activity based on external conformational cues by tethering the outer arm dynein heavy chain (DNAH5) to the microtubule within the axoneme. Important for ciliary function in the airways and for the function of the cilia that produce the nodal flow essential for the determination of the left-right asymmetry. The chain is Dynein axonemal light chain 1 (Dnal1) from Mus musculus (Mouse).